Here is a 221-residue protein sequence, read N- to C-terminus: Glutathione S-transferase alpha-3 (221 aa).

Positions 3 to 83 (GKPVLHYFDG…YIATKYNLYG (81 aa)) constitute a GST N-terminal domain. N6-succinyllysine is present on Lys4. Glutathione contacts are provided by residues Tyr9, Arg45, 54–55 (QV), and 67–68 (QT). A GST C-terminal domain is found at 85 to 207 (DMKERALIDM…LQPGSQRKPL (123 aa)).

This sequence belongs to the GST superfamily. Alpha family. As to quaternary structure, heterodimer of YC1 and YC2.

Its subcellular location is the cytoplasm. It carries out the reaction RX + glutathione = an S-substituted glutathione + a halide anion + H(+). It catalyses the reaction androst-5-ene-3,17-dione = androst-4-ene-3,17-dione. The enzyme catalyses pregn-5-ene-3,20-dione = progesterone. Functionally, conjugation of reduced glutathione to a wide number of exogenous and endogenous hydrophobic electrophiles. Catalyzes isomerization reactions that contribute to the biosynthesis of steroid hormones. Efficiently catalyze obligatory double-bond isomerizations of delta(5)-androstene-3,17-dione and delta(5)-pregnene-3,20-dione, precursors to testosterone and progesterone, respectively. Has substantial activity toward aflatoxin B1-8,9-epoxide. This Rattus norvegicus (Rat) protein is Glutathione S-transferase alpha-3.